We begin with the raw amino-acid sequence, 125 residues long: Mitochondrial import inner membrane translocase subunit TIM16 (125 aa).

Positions 58–110 (EAQQILNVSKLSPEEVQKNYEHLFKVNDKSVGGSFYLQSKVVRAKERLDEELR) are J-like. Position 69 is a phosphoserine (serine 69).

It belongs to the TIM16/PAM16 family. Probable component of the PAM complex at least composed of a mitochondrial HSP70 protein, GRPEL1 or GRPEL2, TIMM44, TIMM16/PAM16 and TIMM14/DNAJC19. Interacts with DNAJC19. Directly interacts with DNAJC15; this interaction counteracts DNAJC15-dependent stimulation of HSPA9 ATPase activity. Associates with the TIM23 complex. Expressed in trabecular bone and cartilage and by differentiated chondrocytes localized in the hypertrophic zone and by osteoblasts at early developmental stages.

Its subcellular location is the mitochondrion inner membrane. Functionally, regulates ATP-dependent protein translocation into the mitochondrial matrix. Inhibits DNAJC19 stimulation of HSPA9/Mortalin ATPase activity. The protein is Mitochondrial import inner membrane translocase subunit TIM16 of Mus musculus (Mouse).